The chain runs to 283 residues: NAD kinase (283 aa).

Aspartate 69 functions as the Proton acceptor in the catalytic mechanism. Residues 69–70, 138–139, lysine 166, aspartate 168, leucine 176, 179–184, and glutamine 235 contribute to the NAD(+) site; these read DG, NE, and TAYNLS.

It belongs to the NAD kinase family. It depends on a divalent metal cation as a cofactor.

Its subcellular location is the cytoplasm. It carries out the reaction NAD(+) + ATP = ADP + NADP(+) + H(+). Its function is as follows. Involved in the regulation of the intracellular balance of NAD and NADP, and is a key enzyme in the biosynthesis of NADP. Catalyzes specifically the phosphorylation on 2'-hydroxyl of the adenosine moiety of NAD to yield NADP. This chain is NAD kinase, found in Helicobacter acinonychis (strain Sheeba).